The following is a 202-amino-acid chain: uncharacterized protein (202 aa).

It localises to the mitochondrion. This is an uncharacterized protein from Schizosaccharomyces pombe (strain 972 / ATCC 24843) (Fission yeast).